A 79-amino-acid chain; its full sequence is Aquaporin Z (79 aa).

A run of 2 helical transmembrane segments spans residues 4-24 (LFAE…SAVF) and 33-53 (IGFA…AYAV). Positions 62 to 64 (NPA) match the NPA 1 motif.

It belongs to the MIP/aquaporin (TC 1.A.8) family. Homotetramer.

It localises to the cell membrane. It carries out the reaction H2O(in) = H2O(out). Channel that permits osmotically driven movement of water in both directions. It is involved in the osmoregulation and in the maintenance of cell turgor during volume expansion in rapidly growing cells. It mediates rapid entry or exit of water in response to abrupt changes in osmolarity. The chain is Aquaporin Z from Flavobacterium johnsoniae (Cytophaga johnsonae).